We begin with the raw amino-acid sequence, 198 residues long: Inosine triphosphate pyrophosphatase (198 aa).

Ala2 bears the N-acetylalanine mark. 14 to 19 is a binding site for ITP; that stretch reads TGNAKK. Residue Glu44 participates in Mg(2+) binding. Residues Lys56, 72–73, and Lys89 contribute to the ITP site; that span reads DT. Ser146 bears the Phosphoserine mark. ITP contacts are provided by residues 149-152, Lys172, and 177-178; these read FGWD and HR.

Belongs to the HAM1 NTPase family. Homodimer. It depends on Mg(2+) as a cofactor. Mn(2+) serves as cofactor.

Its subcellular location is the cytoplasm. The catalysed reaction is ITP + H2O = IMP + diphosphate + H(+). It catalyses the reaction dITP + H2O = dIMP + diphosphate + H(+). The enzyme catalyses XTP + H2O = XMP + diphosphate + H(+). It carries out the reaction N(6)-hydroxy-dATP + H2O = N(6)-hydroxy-dAMP + diphosphate + H(+). Its function is as follows. Pyrophosphatase that hydrolyzes the non-canonical purine nucleotides inosine triphosphate (ITP), deoxyinosine triphosphate (dITP) as well as 2'-deoxy-N-6-hydroxylaminopurine triphosphate (dHAPTP) and xanthosine 5'-triphosphate (XTP) to their respective monophosphate derivatives. The enzyme does not distinguish between the deoxy- and ribose forms. Probably excludes non-canonical purines from RNA and DNA precursor pools, thus preventing their incorporation into RNA and DNA and avoiding chromosomal lesions. This is Inosine triphosphate pyrophosphatase (Itpa) from Rattus norvegicus (Rat).